A 284-amino-acid polypeptide reads, in one-letter code: 4-diphosphocytidyl-2-C-methyl-D-erythritol kinase (284 aa).

The active site involves Lys-14. ATP is bound at residue 98–108 (PMGGGLGGGSS). Asp-140 is an active-site residue.

It belongs to the GHMP kinase family. IspE subfamily.

It carries out the reaction 4-CDP-2-C-methyl-D-erythritol + ATP = 4-CDP-2-C-methyl-D-erythritol 2-phosphate + ADP + H(+). It functions in the pathway isoprenoid biosynthesis; isopentenyl diphosphate biosynthesis via DXP pathway; isopentenyl diphosphate from 1-deoxy-D-xylulose 5-phosphate: step 3/6. Catalyzes the phosphorylation of the position 2 hydroxy group of 4-diphosphocytidyl-2C-methyl-D-erythritol. This is 4-diphosphocytidyl-2-C-methyl-D-erythritol kinase from Shewanella sp. (strain MR-7).